The sequence spans 81 residues: MSHAVKIYDTCIGCTQCVRACPLDVLEMVPWDGCKAAQIASSPRTEDCVGCKRCETACPTDFLSIRVYLGDETSRSMGLAY.

4Fe-4S ferredoxin-type domains lie at 2–31 and 39–68; these read SHAVKIYDTCIGCTQCVRACPLDVLEMVPW and IASSPRTEDCVGCKRCETACPTDFLSIRVY. Cys11, Cys14, Cys17, Cys21, Cys48, Cys51, Cys54, and Cys58 together coordinate [4Fe-4S] cluster.

In terms of assembly, the cyanobacterial PSI reaction center is composed of one copy each of PsaA,B,C,D,E,F,I,J,K,L,M and X, and forms trimeric complexes. [4Fe-4S] cluster is required as a cofactor.

It is found in the cellular thylakoid membrane. The enzyme catalyses reduced [plastocyanin] + hnu + oxidized [2Fe-2S]-[ferredoxin] = oxidized [plastocyanin] + reduced [2Fe-2S]-[ferredoxin]. In terms of biological role, apoprotein for the two 4Fe-4S centers FA and FB of photosystem I (PSI); essential for photochemical activity. FB is the terminal electron acceptor of PSI, donating electrons to ferredoxin. The C-terminus interacts with PsaA/B/D and helps assemble the protein into the PSI complex. Required for binding of PsaD and PsaE to PSI. PSI is a plastocyanin/cytochrome c6-ferredoxin oxidoreductase, converting photonic excitation into a charge separation, which transfers an electron from the donor P700 chlorophyll pair to the spectroscopically characterized acceptors A0, A1, FX, FA and FB in turn. The protein is Photosystem I iron-sulfur center of Prochlorococcus marinus (strain MIT 9312).